The sequence spans 319 residues: Protease HtpX homolog (319 aa).

The next 2 helical transmembrane spans lie at 6 to 26 (TAMLLAFMTVLFMAVGYVIGG) and 28 to 48 (GGMMIALVIAAGMNFFSYWNS). His130 is a binding site for Zn(2+). Residue Glu131 is part of the active site. His134 is a Zn(2+) binding site. 2 helical membrane passes run 145–165 (MTATLAGAISMLGNFAFFFGG) and 172–192 (PLGFIGVLIAMIVAPLAAALV). Glu201 is a binding site for Zn(2+). The tract at residues 280-319 (EMSTGSTAPVRPDNAVRKSRSVPRTGWGRGGSEPPKGPWS) is disordered.

It belongs to the peptidase M48B family. Requires Zn(2+) as cofactor.

It localises to the cell inner membrane. The sequence is that of Protease HtpX homolog from Sinorhizobium medicae (strain WSM419) (Ensifer medicae).